The primary structure comprises 362 residues: MNSFGIRFKFTSFGESHGQAIGCVIDGMPAGVKFDFDFLQEMLDKRKPGQNKFSTPRKEEDKAQVLSGVFEGYTTGTPISVLVYNENTRSKDYEKDVFRPAHADFTYYHKYGIRDYRGGGRASARESIARVAAGALAQMLLKEFDIEIMSGVFGVGSIDSKLSNDEFDFNCAKNSEVYALDKNLEQSFKDEILKAKKAKDSIGARVFTRVKNPIKGLGEPLYDKLDSKLAHAIMGVNAVKAIEIGSGIQSSYMYGSQNNDELKDGVFLSNHSGGILGGISNGGFIDIKTYFKPTPSIFLPQQTQNIQGENIIRELKGRHDPCVGIRGSIVVNAMVAICMADALLLNASSNLQNLQRVYGKNK.

Residue Arg46 participates in NADP(+) binding. FMN contacts are provided by residues 121-123 (RAS), 237-238 (NA), Gly277, 292-296 (KPTPS), and Arg318.

The protein belongs to the chorismate synthase family. As to quaternary structure, homotetramer. FMNH2 serves as cofactor.

It carries out the reaction 5-O-(1-carboxyvinyl)-3-phosphoshikimate = chorismate + phosphate. Its pathway is metabolic intermediate biosynthesis; chorismate biosynthesis; chorismate from D-erythrose 4-phosphate and phosphoenolpyruvate: step 7/7. Functionally, catalyzes the anti-1,4-elimination of the C-3 phosphate and the C-6 proR hydrogen from 5-enolpyruvylshikimate-3-phosphate (EPSP) to yield chorismate, which is the branch point compound that serves as the starting substrate for the three terminal pathways of aromatic amino acid biosynthesis. This reaction introduces a second double bond into the aromatic ring system. This is Chorismate synthase from Campylobacter lari (strain RM2100 / D67 / ATCC BAA-1060).